The following is a 264-amino-acid chain: S-adenosylmethionine decarboxylase proenzyme (264 aa).

The active-site Schiff-base intermediate with substrate; via pyruvic acid is the S112. Position 112 is a pyruvic acid (Ser); by autocatalysis (S112). Residue H117 is the Proton acceptor; for processing activity of the active site. C140 functions as the Proton donor; for catalytic activity in the catalytic mechanism.

This sequence belongs to the prokaryotic AdoMetDC family. Type 2 subfamily. In terms of assembly, heterooctamer of four alpha and four beta chains arranged as a tetramer of alpha/beta heterodimers. Pyruvate is required as a cofactor. Is synthesized initially as an inactive proenzyme. Formation of the active enzyme involves a self-maturation process in which the active site pyruvoyl group is generated from an internal serine residue via an autocatalytic post-translational modification. Two non-identical subunits are generated from the proenzyme in this reaction, and the pyruvate is formed at the N-terminus of the alpha chain, which is derived from the carboxyl end of the proenzyme. The post-translation cleavage follows an unusual pathway, termed non-hydrolytic serinolysis, in which the side chain hydroxyl group of the serine supplies its oxygen atom to form the C-terminus of the beta chain, while the remainder of the serine residue undergoes an oxidative deamination to produce ammonia and the pyruvoyl group blocking the N-terminus of the alpha chain.

The enzyme catalyses S-adenosyl-L-methionine + H(+) = S-adenosyl 3-(methylsulfanyl)propylamine + CO2. It functions in the pathway amine and polyamine biosynthesis; S-adenosylmethioninamine biosynthesis; S-adenosylmethioninamine from S-adenosyl-L-methionine: step 1/1. In terms of biological role, catalyzes the decarboxylation of S-adenosylmethionine to S-adenosylmethioninamine (dcAdoMet), the propylamine donor required for the synthesis of the polyamines spermine and spermidine from the diamine putrescine. This Yersinia enterocolitica serotype O:8 / biotype 1B (strain NCTC 13174 / 8081) protein is S-adenosylmethionine decarboxylase proenzyme.